A 244-amino-acid chain; its full sequence is Krueppel-like factor 9 (244 aa).

Disordered regions lie at residues 24–51 (VPEH…GDPG) and 80–142 (SVCS…SEKR). Residues 32–51 (DAERLRLPEREVTKEHGDPG) show a composition bias toward basic and acidic residues. Phosphoserine is present on Ser-122. 3 consecutive C2H2-type zinc fingers follow at residues 143–167 (HKCP…YRVH), 173–197 (FPCT…YRTH), and 203–225 (FRCP…ARRH).

This sequence belongs to the Sp1 C2H2-type zinc-finger protein family. Interacts with ZZEF1.

The protein resides in the nucleus. Its function is as follows. Transcription factor that binds to GC box promoter elements. Selectively activates mRNA synthesis from genes containing tandem repeats of GC boxes but represses genes with a single GC box. Acts as an epidermal circadian transcription factor regulating keratinocyte proliferation. In Sus scrofa (Pig), this protein is Krueppel-like factor 9 (KLF9).